Here is a 150-residue protein sequence, read N- to C-terminus: Deoxyuridine 5'-triphosphate nucleotidohydrolase (150 aa).

Residues 69 to 71, Asn-82, 86 to 88, and Met-96 each bind substrate; these read RSG and LID.

This sequence belongs to the dUTPase family. The cofactor is Mg(2+).

It carries out the reaction dUTP + H2O = dUMP + diphosphate + H(+). It functions in the pathway pyrimidine metabolism; dUMP biosynthesis; dUMP from dCTP (dUTP route): step 2/2. This enzyme is involved in nucleotide metabolism: it produces dUMP, the immediate precursor of thymidine nucleotides and it decreases the intracellular concentration of dUTP so that uracil cannot be incorporated into DNA. The protein is Deoxyuridine 5'-triphosphate nucleotidohydrolase of Acinetobacter baumannii (strain AB307-0294).